The chain runs to 412 residues: Circumsporozoite protein (412 aa).

Residues 1–18 (MMRKLAILSVSSFLFVEA) form the signal peptide. The tract at residues 69–328 (SRSLGENDDG…KNNNNEEPSD (260 aa)) is disordered. Over residues 85 to 105 (NGREGKDEDKRDGNNEDNEKL) the composition is skewed to basic and acidic residues. A required for the binding to heparan sulfate proteoglycans (HSPGs) on the surface of host hepatocytes region spans residues 104 to 111 (KLRKPKHK). A region I; contains the proteolytic cleavage site region spans residues 112–116 (KLKQP). Residues 120–288 (NPDPNANPNV…PNANPNANPN (169 aa)) show a composition bias toward low complexity. Repeat copies occupy residues 123-126 (PNAN), 127-130 (PNVD), 131-134 (PNAN), 135-138 (PNVD), 139-142 (PNAN), 143-146 (PNVD), 147-150 (PNAN), 151-154 (PNAN), 155-158 (PNAN), 159-162 (PNAN), 163-166 (PNAN), 167-170 (PNAN), 171-174 (PNAN), 175-178 (PNAN), 179-182 (PNAN), 183-186 (PNAN), 187-190 (PNAN), 191-194 (PNAN), 195-198 (PNAN), 199-202 (PNAN), 203-206 (PNAN), 207-210 (PNVD), 211-214 (PNAN), 215-218 (PNAN), 219-222 (PNAN), 223-226 (PNAN), 227-230 (PNAN), 231-234 (PNAN), 235-238 (PNAN), 239-242 (PNAN), 243-246 (PNAN), 247-250 (PNAN), 251-254 (PNAN), 255-258 (PNAN), 259-262 (PNAN), 263-266 (PNAN), 267-270 (PNAN), 271-274 (PNAN), 275-278 (PNAN), 279-282 (PNAN), and 283-286 (PNAN). The 41 X 4 AA tandem repeats of P-N-[AV]-[ND] stretch occupies residues 123–286 (PNANPNVDPN…ANPNANPNAN (164 aa)). A compositionally biased stretch (polar residues) spans 289–304 (KNNQGNGQGHNMPNDP). Residues 310–324 (ENANANNAVKNNNNE) are compositionally biased toward low complexity. The region spanning 337-390 (KIKNSISTEWSPCSVTCGNGIQVRIKPGSANKPKDELDYENDIEKKICKMEKCS) is the TSP type-1 domain. 2 disulfide bridges follow: cysteine 349/cysteine 384 and cysteine 353/cysteine 389. Threonine 352 is a glycosylation site (O-linked (Fuc) threonine). Cysteine 389 is lipidated: GPI-anchor amidated cysteine. A propeptide spans 390 to 412 (SSVFNVVNSSIGLIMVLSFLFLN) (removed in mature form).

Belongs to the plasmodium circumsporozoite protein family. During host cell invasion, proteolytically cleaved at the cell membrane in the region I by a papain-like cysteine protease of parasite origin. Cleavage is triggered by the sporozoite contact with highly sulfated heparan sulfate proteoglycans (HSPGs) present on the host hepatocyte cell surface. Cleavage exposes the TSP type-1 (TSR) domain and is required for productive invasion of host hepatocytes but not for adhesion to the host cell membrane. Cleavage is dispensable for sporozoite development in the oocyst, motility and for traversal of host and vector cells. In terms of processing, O-glycosylated; maybe by POFUT2.

It localises to the cell membrane. Its subcellular location is the cytoplasm. Essential sporozoite protein. In the mosquito vector, required for sporozoite development in the oocyst, migration through the vector hemolymph and entry into the vector salivary glands. In the vertebrate host, required for sporozoite migration through the host dermis and infection of host hepatocytes. Binds to highly sulfated heparan sulfate proteoglycans (HSPGs) on the surface of host hepatocytes. Its function is as follows. In the vertebrate host, binds to highly sulfated heparan sulfate proteoglycans (HSPGs) on the surface of host hepatocytes and is required for sporozoite invasion of the host hepatocytes. This chain is Circumsporozoite protein, found in Plasmodium falciparum.